Reading from the N-terminus, the 72-residue chain is Translation initiation factor IF-1 (72 aa).

Residues 1-72 (MSKQSSIEQD…TKGRIVFRYK (72 aa)) enclose the S1-like domain.

Belongs to the IF-1 family. In terms of assembly, component of the 30S ribosomal translation pre-initiation complex which assembles on the 30S ribosome in the order IF-2 and IF-3, IF-1 and N-formylmethionyl-tRNA(fMet); mRNA recruitment can occur at any time during PIC assembly.

Its subcellular location is the cytoplasm. Its function is as follows. One of the essential components for the initiation of protein synthesis. Stabilizes the binding of IF-2 and IF-3 on the 30S subunit to which N-formylmethionyl-tRNA(fMet) subsequently binds. Helps modulate mRNA selection, yielding the 30S pre-initiation complex (PIC). Upon addition of the 50S ribosomal subunit IF-1, IF-2 and IF-3 are released leaving the mature 70S translation initiation complex. This chain is Translation initiation factor IF-1, found in Cytophaga hutchinsonii (strain ATCC 33406 / DSM 1761 / CIP 103989 / NBRC 15051 / NCIMB 9469 / D465).